A 448-amino-acid chain; its full sequence is Homogentisate 1,2-dioxygenase (448 aa).

A disordered region spans residues 1 to 26; that stretch reads MNMLAPAAKNAFTPASPDRPAYQSGF. The Proton acceptor role is filled by His302. 2 residues coordinate Fe cation: His345 and Glu351. Homogentisate is bound by residues Tyr360 and His381. His381 provides a ligand contact to Fe cation.

The protein belongs to the homogentisate dioxygenase family. Hexamer; dimer of trimers. The cofactor is Fe cation.

It carries out the reaction homogentisate + O2 = 4-maleylacetoacetate + H(+). It participates in amino-acid degradation; L-phenylalanine degradation; acetoacetate and fumarate from L-phenylalanine: step 4/6. Involved in the catabolism of homogentisate (2,5-dihydroxyphenylacetate or 2,5-OH-PhAc), a central intermediate in the degradation of phenylalanine and tyrosine. Catalyzes the oxidative ring cleavage of the aromatic ring of homogentisate to yield maleylacetoacetate. This chain is Homogentisate 1,2-dioxygenase, found in Ralstonia nicotianae (strain ATCC BAA-1114 / GMI1000) (Ralstonia solanacearum).